Consider the following 159-residue polypeptide: U-actitoxin-Avd13a/b (159 aa).

Positions 1–18 are cleaved as a signal peptide; it reads MKSIFLVFFAVCLVKAEA. Residues 19–26 constitute a propeptide that is removed on maturation; the sequence is GKGRKREP. 2 cysteine pairs are disulfide-bonded: Cys-33-Cys-45 and Cys-36-Cys-52. The propeptide occupies 59–60; sequence EP. Cystine bridges form between Cys-67/Cys-79 and Cys-70/Cys-86. Residues 93–94 constitute a propeptide that is removed on maturation; sequence EP. Intrachain disulfides connect Cys-101–Cys-113 and Cys-104–Cys-120. The propeptide occupies 127–128; that stretch reads EP. Intrachain disulfides connect Cys-135–Cys-147 and Cys-138–Cys-154.

The protein belongs to the sea anemone BBH family.

The protein localises to the secreted. The protein resides in the nematocyst. In terms of biological role, inhibits ion channels. The polypeptide is U-actitoxin-Avd13a/b (Anemonia viridis (Snakelocks anemone)).